The primary structure comprises 375 residues: Growth/differentiation factor 8 (375 aa).

The N-terminal stretch at Met1–Leu23 is a signal peptide. Positions Asp24 to Arg266 are excised as a propeptide. An N-linked (GlcNAc...) asparagine glycan is attached at Asn71. 4 cysteine pairs are disulfide-bonded: Cys272-Cys282, Cys281-Cys340, Cys309-Cys372, and Cys313-Cys374.

It belongs to the TGF-beta family. Homodimer; disulfide-linked.

Its subcellular location is the secreted. Its function is as follows. Acts specifically as a negative regulator of skeletal muscle growth. This Coturnix coturnix (Common quail) protein is Growth/differentiation factor 8 (MSTN).